The following is a 403-amino-acid chain: Cytoplasmic tRNA 2-thiolation protein 2 (403 aa).

This sequence belongs to the CTU2/NCS2 family.

It localises to the cytoplasm. The protein operates within tRNA modification; 5-methoxycarbonylmethyl-2-thiouridine-tRNA biosynthesis. In terms of biological role, plays a central role in 2-thiolation of mcm(5)S(2)U at tRNA wobble positions of tRNA(Lys), tRNA(Glu) and tRNA(Gln). May act by forming a heterodimer with NCS6/CTU1 that ligates sulfur from thiocarboxylated URM1 onto the uridine of tRNAs at wobble position. In Drosophila willistoni (Fruit fly), this protein is Cytoplasmic tRNA 2-thiolation protein 2.